The sequence spans 917 residues: Dolichyl-phosphooligosaccharide-protein glycotransferase (917 aa).

The span at 1 to 10 (MTENNEKVKN) shows a compositional bias: basic and acidic residues. Positions 1–20 (MTENNEKVKNSDSANNQSSK) are disordered. Residues 1–38 (MTENNEKVKNSDSANNQSSKNSKFNFNFEDKKVKCAKT) are Cytoplasmic-facing. A compositionally biased stretch (low complexity) spans 11-20 (SDSANNQSSK). Residues 39 to 59 (ILIIIFLAFLSFQMRAQTADM) form a helical membrane-spanning segment. Topologically, residues 60–154 (GFTTNEQYLD…AMDSTVTLMN (95 aa)) are extracellular. Residues 82-84 (ALD) carry the DXD motif 1 motif. Residue D84 coordinates Mn(2+). A helical membrane pass occupies residues 155-175 (AAFWVPAILSMFLITPIFFTV). The Cytoplasmic portion of the chain corresponds to 176 to 182 (RRITSSD). The chain crosses the membrane as a helical span at residues 183-203 (IGGAVAAILASLSPSIFVKTV). At 204-209 (AGFSDT) the chain is on the extracellular side. A Mn(2+)-binding site is contributed by D208. Residues 208–210 (DTP) carry the DXD motif 2 motif. A helical transmembrane segment spans residues 210-230 (PILEILPLLFIVWFIIEAIHY). Residues 231 to 237 (SKEKNYK) are Cytoplasmic-facing. The helical transmembrane segment at 238-260 (SLIYGLLATLMLALYPFMWSAWW) threads the bilayer. The Extracellular portion of the chain corresponds to 261 to 263 (YGY). A helical membrane pass occupies residues 264 to 286 (YIVIAFLVIYAIYKGISYNSIAK). The Cytoplasmic segment spans residues 287–308 (YTKSKNNNHKDKIESEKLEMLN). The chain crosses the membrane as a helical span at residues 309–329 (ILKISGLFIIGGAVLITALYG). Residues 330 to 372 (VSTTMNALQAPLNYLGLDEVSSQTGWPNVLTTVSELDTASLDE) lie on the Extracellular side of the membrane. The short motif at 361–364 (TVSE) is the TIXE motif element. Residue E364 participates in Mn(2+) binding. The helical transmembrane segment at 373-393 (IISSSLGSIHLFAIGLIGIFL) threads the bilayer. At 394–413 (SLFRKVLTPVKQISNGLAEK) the chain is on the cytoplasmic side. Residues 414 to 434 (LDIKYALLLIIWFAVTFLAAS) traverse the membrane as a helical segment. Residues 435-438 (KGVR) lie on the Extracellular side of the membrane. R438 serves as a coordination point for a glycophospholipid. The helical transmembrane segment at 439–459 (FVALMVPPLSIGVGIFVGFIE) threads the bilayer. Residues 460-469 (QFIKNNLDKK) lie on the Cytoplasmic side of the membrane. Residues 470-490 (YEYVAYPTIAIIVLYALFTIY) traverse the membrane as a helical segment. Over 491–506 (RADSADLVRMLLPSNY) the chain is Extracellular. Residues 507-527 (VPIAEGIMLASLAVLIIYKVA) form a helical membrane-spanning segment. Residues 528 to 541 (ELIAESNKKLVMNK) lie on the Cytoplasmic side of the membrane. The chain crosses the membrane as a helical span at residues 542–562 (IFMILLAIGLITPTIATIVPF). Residues 563–917 (YSVPTYNDGW…FSVDYGNYSK (355 aa)) lie on the Extracellular side of the membrane. The interacts with target acceptor peptide in protein substrate stretch occupies residues 592-594 (WWD). The WWDYG motif motif lies at 592-596 (WWDNG). The MI motif motif lies at 719-726 (MTSIASVW).

It belongs to the STT3 family. Mn(2+) is required as a cofactor. Mg(2+) serves as cofactor.

Its subcellular location is the cell membrane. The enzyme catalyses an archaeal dolichyl phosphooligosaccharide + [protein]-L-asparagine = an archaeal dolichyl phosphate + a glycoprotein with the oligosaccharide chain attached by N-beta-D-glycosyl linkage to a protein L-asparagine.. It functions in the pathway cell surface structure biogenesis; S-layer biogenesis. It participates in protein modification; protein glycosylation. Functionally, oligosaccharyl transferase (OST) that catalyzes the initial transfer of a defined glycan (ManNAcGlc-2,3-diNAcAGlcNAc in M.voltae) from the lipid carrier dolichol-monophosphate to an asparagine residue within an Asn-X-Ser/Thr consensus motif in nascent polypeptide chains, the first step in protein N-glycosylation. Involved in the assembly of an N-linked disaccharide that decorates the S-layer glycoprotein and flagellins. In Methanococcus voltae, this protein is Dolichyl-phosphooligosaccharide-protein glycotransferase.